We begin with the raw amino-acid sequence, 154 residues long: Host transcription reprogramming factor 5 (154 aa).

An N-terminal signal peptide occupies residues Met-1–Ala-19. A disordered region spans residues Thr-24–Arg-85. Over residues Gln-35–Asp-50 the composition is skewed to polar residues. The span at Glu-69–Arg-85 shows a compositional bias: basic and acidic residues. A C2H2-type; degenerate zinc finger spans residues Tyr-96–His-121.

It localises to the secreted. Its subcellular location is the host nucleus. Its function is as follows. Probable secreted effector that translocates into the nuclei of host cells to reprogram the expression of targeted genes by binding on effector binding elements in rice. The sequence is that of Host transcription reprogramming factor 5 from Pyricularia oryzae (strain 70-15 / ATCC MYA-4617 / FGSC 8958) (Rice blast fungus).